Consider the following 485-residue polypeptide: tRNA sulfurtransferase (485 aa).

Positions 63–167 (ERYAERLACI…NEHLYLVEKR (105 aa)) constitute a THUMP domain. ATP-binding positions include 185-186 (LI), lysine 267, glycine 289, and glutamine 298. The cysteines at positions 346 and 458 are disulfide-linked. In terms of domain architecture, Rhodanese spans 406–484 (VSGGEVVVDI…GYHNVKVYRP (79 aa)). Cysteine 458 functions as the Cysteine persulfide intermediate in the catalytic mechanism.

This sequence belongs to the ThiI family.

The protein resides in the cytoplasm. It carries out the reaction [ThiI sulfur-carrier protein]-S-sulfanyl-L-cysteine + a uridine in tRNA + 2 reduced [2Fe-2S]-[ferredoxin] + ATP + H(+) = [ThiI sulfur-carrier protein]-L-cysteine + a 4-thiouridine in tRNA + 2 oxidized [2Fe-2S]-[ferredoxin] + AMP + diphosphate. It catalyses the reaction [ThiS sulfur-carrier protein]-C-terminal Gly-Gly-AMP + S-sulfanyl-L-cysteinyl-[cysteine desulfurase] + AH2 = [ThiS sulfur-carrier protein]-C-terminal-Gly-aminoethanethioate + L-cysteinyl-[cysteine desulfurase] + A + AMP + 2 H(+). It participates in cofactor biosynthesis; thiamine diphosphate biosynthesis. Functionally, catalyzes the ATP-dependent transfer of a sulfur to tRNA to produce 4-thiouridine in position 8 of tRNAs, which functions as a near-UV photosensor. Also catalyzes the transfer of sulfur to the sulfur carrier protein ThiS, forming ThiS-thiocarboxylate. This is a step in the synthesis of thiazole, in the thiamine biosynthesis pathway. The sulfur is donated as persulfide by IscS. This is tRNA sulfurtransferase from Shewanella loihica (strain ATCC BAA-1088 / PV-4).